The primary structure comprises 310 residues: Ribosomal RNA small subunit methyltransferase H (310 aa).

Residues 33–35, Asp52, Phe79, Asp98, and Gln105 contribute to the S-adenosyl-L-methionine site; that span reads GGH.

The protein belongs to the methyltransferase superfamily. RsmH family.

The protein localises to the cytoplasm. The enzyme catalyses cytidine(1402) in 16S rRNA + S-adenosyl-L-methionine = N(4)-methylcytidine(1402) in 16S rRNA + S-adenosyl-L-homocysteine + H(+). Specifically methylates the N4 position of cytidine in position 1402 (C1402) of 16S rRNA. This chain is Ribosomal RNA small subunit methyltransferase H, found in Campylobacter jejuni (strain RM1221).